The following is a 63-amino-acid chain: Cecropin-A1 (63 aa).

The N-terminal stretch at 1 to 23 (MKFYNIFVFVALILAITIGQSEA) is a signal peptide. Arg-62 is modified (arginine amide).

It belongs to the cecropin family.

It is found in the secreted. Its function is as follows. Cecropins have lytic and antibacterial activity against several Gram-positive and Gram-negative bacteria. This Drosophila mauritiana (Fruit fly) protein is Cecropin-A1 (CecA1).